Reading from the N-terminus, the 931-residue chain is Dual serine/threonine and tyrosine protein kinase (931 aa).

Residues 1–24 are disordered; the sequence is MEGDAPQRVSERVSGPGPGGGGGG. Positions 397 to 424 form a coiled coil; the sequence is RKKENELYESLMNIANRKQEEMKDMICE. Positions 654–908 constitute a Protein kinase domain; sequence PKLGQELGRG…PLLGIVQPML (255 aa). ATP contacts are provided by residues 660 to 668 and lysine 683; that span reads LGRGQYGVV. The active-site Proton acceptor is the aspartate 779.

It belongs to the protein kinase superfamily. Ser/Thr protein kinase family.

It localises to the cytoplasm. Its subcellular location is the cell membrane. It is found in the apical cell membrane. The protein resides in the basolateral cell membrane. The protein localises to the cell junction. The catalysed reaction is L-seryl-[protein] + ATP = O-phospho-L-seryl-[protein] + ADP + H(+). The enzyme catalyses L-threonyl-[protein] + ATP = O-phospho-L-threonyl-[protein] + ADP + H(+). It catalyses the reaction L-tyrosyl-[protein] + ATP = O-phospho-L-tyrosyl-[protein] + ADP + H(+). Acts as a positive regulator of ERK phosphorylation downstream of fibroblast growth factor-receptor activation. Involved in the regulation of both caspase-dependent apoptosis and caspase-independent cell death. In the skin, it plays a predominant role in suppressing caspase-dependent apoptosis in response to UV stress in a range of dermal cell types. The protein is Dual serine/threonine and tyrosine protein kinase (DSTYK) of Canis lupus familiaris (Dog).